We begin with the raw amino-acid sequence, 126 residues long: Protein ApaG (126 aa).

The ApaG domain maps to 2 to 126; sequence SDPRYQIDVS…FRLAVPGALH (125 aa).

The protein is Protein ApaG of Ectopseudomonas mendocina (strain ymp) (Pseudomonas mendocina).